Here is a 166-residue protein sequence, read N- to C-terminus: Ribonuclease H (166 aa).

The RNase H type-1 domain maps to 5-147 (PRKRVALFTD…VDREARRQAQ (143 aa)). Residues Asp-14, Glu-52, Asp-74, and Asp-139 each coordinate Mg(2+). Positions 128–166 (GHTGHPENERVDREARRQAQSQAKTPCPPRAPTLFHEEA) are disordered. Over residues 131-144 (GHPENERVDREARR) the composition is skewed to basic and acidic residues.

This sequence belongs to the RNase H family. As to quaternary structure, monomer. It depends on Mg(2+) as a cofactor.

It catalyses the reaction Endonucleolytic cleavage to 5'-phosphomonoester.. Its function is as follows. Endonuclease that specifically degrades the RNA of RNA-DNA hybrids. This is Ribonuclease H (rnhA) from Thermus thermophilus (strain ATCC 27634 / DSM 579 / HB8).